The chain runs to 148 residues: Large ribosomal subunit protein bL9 (148 aa).

As to quaternary structure, part of the 50S ribosomal subunit.

Binds to the 23S rRNA. Extends more that 50 Angstroms beyond the surface of the 70S ribosome. This Thermus thermophilus (strain ATCC 27634 / DSM 579 / HB8) protein is Large ribosomal subunit protein bL9 (rplI).